Here is a 179-residue protein sequence, read N- to C-terminus: Large ribosomal subunit protein uL6 (179 aa).

Belongs to the universal ribosomal protein uL6 family. Part of the 50S ribosomal subunit.

In terms of biological role, this protein binds to the 23S rRNA, and is important in its secondary structure. It is located near the subunit interface in the base of the L7/L12 stalk, and near the tRNA binding site of the peptidyltransferase center. The chain is Large ribosomal subunit protein uL6 from Clostridium perfringens (strain ATCC 13124 / DSM 756 / JCM 1290 / NCIMB 6125 / NCTC 8237 / Type A).